A 276-amino-acid polypeptide reads, in one-letter code: Shikimate dehydrogenase (NADP(+)) (276 aa).

Shikimate-binding positions include 15–17 (SKS) and Thr62. The active-site Proton acceptor is Lys66. Glu78 serves as a coordination point for NADP(+). Shikimate is bound by residues Asn87 and Asp103. NADP(+) contacts are provided by residues 127-131 (GAGGV), 150-155 (NRTHIK), and Met214. Shikimate is bound at residue Tyr216. Gly239 contacts NADP(+).

It belongs to the shikimate dehydrogenase family. Homodimer.

The catalysed reaction is shikimate + NADP(+) = 3-dehydroshikimate + NADPH + H(+). It participates in metabolic intermediate biosynthesis; chorismate biosynthesis; chorismate from D-erythrose 4-phosphate and phosphoenolpyruvate: step 4/7. Involved in the biosynthesis of the chorismate, which leads to the biosynthesis of aromatic amino acids. Catalyzes the reversible NADPH linked reduction of 3-dehydroshikimate (DHSA) to yield shikimate (SA). This Haemophilus ducreyi (strain 35000HP / ATCC 700724) protein is Shikimate dehydrogenase (NADP(+)).